We begin with the raw amino-acid sequence, 513 residues long: ATP synthase subunit alpha (513 aa).

169–176 provides a ligand contact to ATP; that stretch reads GDRQTGKS.

This sequence belongs to the ATPase alpha/beta chains family. In terms of assembly, F-type ATPases have 2 components, CF(1) - the catalytic core - and CF(0) - the membrane proton channel. CF(1) has five subunits: alpha(3), beta(3), gamma(1), delta(1), epsilon(1). CF(0) has three main subunits: a(1), b(2) and c(9-12). The alpha and beta chains form an alternating ring which encloses part of the gamma chain. CF(1) is attached to CF(0) by a central stalk formed by the gamma and epsilon chains, while a peripheral stalk is formed by the delta and b chains.

It is found in the cell membrane. The enzyme catalyses ATP + H2O + 4 H(+)(in) = ADP + phosphate + 5 H(+)(out). Its function is as follows. Produces ATP from ADP in the presence of a proton gradient across the membrane. The alpha chain is a regulatory subunit. The sequence is that of ATP synthase subunit alpha from Baumannia cicadellinicola subsp. Homalodisca coagulata.